Reading from the N-terminus, the 358-residue chain is Mannonate dehydratase (358 aa).

Belongs to the mannonate dehydratase family. Fe(2+) serves as cofactor. Mn(2+) is required as a cofactor.

The enzyme catalyses D-mannonate = 2-dehydro-3-deoxy-D-gluconate + H2O. The protein operates within carbohydrate metabolism; pentose and glucuronate interconversion. Catalyzes the dehydration of D-mannonate. This is Mannonate dehydratase from Lachnoclostridium phytofermentans (strain ATCC 700394 / DSM 18823 / ISDg) (Clostridium phytofermentans).